A 232-amino-acid polypeptide reads, in one-letter code: Uracil phosphoribosyltransferase (232 aa).

Lys38–Lys42 contacts GTP. 5-phospho-alpha-D-ribose 1-diphosphate contacts are provided by residues Arg87, Arg112, and Asp140–Thr148. Uracil is bound by residues Ile204 and Gly209–Ala211. 5-phospho-alpha-D-ribose 1-diphosphate is bound at residue Asp210.

The protein belongs to the UPRTase family. The cofactor is Mg(2+).

It catalyses the reaction UMP + diphosphate = 5-phospho-alpha-D-ribose 1-diphosphate + uracil. It functions in the pathway pyrimidine metabolism; UMP biosynthesis via salvage pathway; UMP from uracil: step 1/1. Its activity is regulated as follows. Allosterically activated by GTP. Catalyzes the conversion of uracil and 5-phospho-alpha-D-ribose 1-diphosphate (PRPP) to UMP and diphosphate. This is Uracil phosphoribosyltransferase from Thermococcus sibiricus (strain DSM 12597 / MM 739).